Here is a 300-residue protein sequence, read N- to C-terminus: Cation-efflux pump FieF (300 aa).

The helical transmembrane segment at 24–44 (LLIKIFAWWYTGSVSILAALV) threads the bilayer. Residues Asp45 and Asp49 each coordinate Zn(2+). The next 2 helical transmembrane spans lie at 82-102 (AALA…LTGI) and 114-134 (AGVG…LVTF). Positions 153 and 157 each coordinate Zn(2+). 2 helical membrane-spanning segments follow: residues 156-176 (SDVM…YGWH) and 178-198 (ADAL…LRMG).

This sequence belongs to the cation diffusion facilitator (CDF) transporter (TC 2.A.4) family. FieF subfamily. As to quaternary structure, homodimer.

It is found in the cell inner membrane. The enzyme catalyses Zn(2+)(in) + H(+)(out) = Zn(2+)(out) + H(+)(in). The catalysed reaction is Cd(2+)(in) + H(+)(out) = Cd(2+)(out) + H(+)(in). It catalyses the reaction Fe(2+)(in) + H(+)(out) = Fe(2+)(out) + H(+)(in). Divalent metal cation transporter which exports Zn(2+), Cd(2+) and possibly Fe(2+). May be involved in zinc and iron detoxification by efflux. The sequence is that of Cation-efflux pump FieF from Klebsiella pneumoniae subsp. pneumoniae (strain ATCC 700721 / MGH 78578).